Consider the following 216-residue polypeptide: Pyridoxine/pyridoxamine 5'-phosphate oxidase (216 aa).

Substrate contacts are provided by residues 9–12 (RLSY) and R67. Residues 62–67 (RIVLLR), 77–78 (YT), K84, and Q106 contribute to the FMN site. Y124, R128, and S132 together coordinate substrate. Residues 142 to 143 (QS) and W188 each bind FMN. Position 194–196 (194–196 (RMH)) interacts with substrate. R198 lines the FMN pocket.

It belongs to the pyridoxamine 5'-phosphate oxidase family. Homodimer. FMN serves as cofactor.

The catalysed reaction is pyridoxamine 5'-phosphate + O2 + H2O = pyridoxal 5'-phosphate + H2O2 + NH4(+). It catalyses the reaction pyridoxine 5'-phosphate + O2 = pyridoxal 5'-phosphate + H2O2. It functions in the pathway cofactor metabolism; pyridoxal 5'-phosphate salvage; pyridoxal 5'-phosphate from pyridoxamine 5'-phosphate: step 1/1. The protein operates within cofactor metabolism; pyridoxal 5'-phosphate salvage; pyridoxal 5'-phosphate from pyridoxine 5'-phosphate: step 1/1. Functionally, catalyzes the oxidation of either pyridoxine 5'-phosphate (PNP) or pyridoxamine 5'-phosphate (PMP) into pyridoxal 5'-phosphate (PLP). In Psychrobacter cryohalolentis (strain ATCC BAA-1226 / DSM 17306 / VKM B-2378 / K5), this protein is Pyridoxine/pyridoxamine 5'-phosphate oxidase.